Reading from the N-terminus, the 333-residue chain is Calcium uniporter protein, mitochondrial (333 aa).

The transit peptide at methionine 1–asparagine 22 directs the protein to the mitochondrion. Residues threonine 23–valine 214 are Mitochondrial matrix-facing. Positions lysine 180–leucine 193 form a coiled coil. The segment at proline 195–arginine 213 is outer juxtamembrane helix (OJMH). A helical membrane pass occupies residues methionine 215–tryptophan 234. Topologically, residues tryptophan 235 to glutamate 243 are mitochondrial intermembrane. A Selectivity filter motif is present at residues tryptophan 239 to tyrosine 247. Glutamate 243 serves as a coordination point for Ca(2+). Residues proline 244–tyrosine 260 traverse the membrane as a helical segment. The Mitochondrial matrix segment spans residues tyrosine 261–lysine 333. The tract at residues leucine 262–proline 271 is inner juxtamembrane helix (IJMH). Positions glutamine 289–proline 316 form a coiled coil.

It belongs to the MCU (TC 1.A.77) family.

The protein resides in the mitochondrion inner membrane. The catalysed reaction is Ca(2+)(in) = Ca(2+)(out). With respect to regulation, inhibited by ruthenium red or its derivative Ru360; possibly by obstructing the pore. Mitochondrial inner membrane calcium uniporter that mediates calcium uptake into mitochondria. Constitutes a pore-forming and calcium-conducting subunit. Mitochondrial calcium homeostasis plays key roles in cellular physiology and regulates cell bioenergetics, cytoplasmic calcium signals and activation of cell death pathways. Required for rapid mitochondrial calcium uptake and mitochondrial reactive oxygen species (mtROS) production after wounding. In addition, together with mitochondrial calcium regulator micu-1, required for mitochondrial calcium uptake following axon injury in PLM touch receptor neurons. The polypeptide is Calcium uniporter protein, mitochondrial (Caenorhabditis elegans).